We begin with the raw amino-acid sequence, 447 residues long: uncharacterized protein (447 aa).

A run of 2 helical transmembrane segments spans residues 380–400 (VLEIGIFGVYALEAAHILLLT) and 412–432 (ILGFPLEFWIILVVTILGVYV).

Its subcellular location is the cell membrane. This is an uncharacterized protein from Methanocaldococcus jannaschii (strain ATCC 43067 / DSM 2661 / JAL-1 / JCM 10045 / NBRC 100440) (Methanococcus jannaschii).